A 424-amino-acid polypeptide reads, in one-letter code: Arogenate dehydratase 4, chloroplastic (424 aa).

Residues 1-34 (MQAATSCDLKFRSTDPTSRNKCFSHAIPKRVAVT) constitute a chloroplast transit peptide. Positions 126 to 303 (RVAYQGVPGA…NVTRFLMLAR (178 aa)) constitute a Prephenate dehydratase domain. The region spanning 319-410 (VFAAQEHKGT…SFLRVLGSYP (92 aa)) is the ACT domain.

As to expression, expressed in roots, leaves, stems, flowers and siliques. More abundant in stems and roots.

The protein resides in the plastid. It is found in the chloroplast stroma. The catalysed reaction is L-arogenate + H(+) = L-phenylalanine + CO2 + H2O. It participates in amino-acid biosynthesis; L-phenylalanine biosynthesis; L-phenylalanine from L-arogenate: step 1/1. Its function is as follows. Converts the prephenate produced from the shikimate-chorismate pathway into phenylalanine. This is Arogenate dehydratase 4, chloroplastic from Arabidopsis thaliana (Mouse-ear cress).